The chain runs to 106 residues: Protein S40-3 (106 aa).

Residues 1–65 (MSEEFQESEV…TEEEGEMTPP (65 aa)) form a disordered region. Residues 16–41 (SFTRKDNKISHNNENYERKSTEKDKI) show a composition bias toward basic and acidic residues.

Belongs to the senescence regulator S40 family.

It localises to the nucleus. Its function is as follows. Regulates senescence either by modulating WRKY53 or by activating SAG12. Affects the natural variation of cyst nematodes sex ratio and susceptibility to parasitic nematodes, depending on single nucleotide polymorphism (SNPs) between cultivars. The polypeptide is Protein S40-3 (Arabidopsis thaliana (Mouse-ear cress)).